The primary structure comprises 115 residues: Phosphoribosyl-AMP cyclohydrolase (115 aa).

Asp80 contributes to the Mg(2+) binding site. Cys81 is a binding site for Zn(2+). Residues Asp82 and Asp84 each coordinate Mg(2+). Zn(2+)-binding residues include Cys97 and Cys104.

This sequence belongs to the PRA-CH family. As to quaternary structure, homodimer. Requires Mg(2+) as cofactor. It depends on Zn(2+) as a cofactor.

Its subcellular location is the cytoplasm. The enzyme catalyses 1-(5-phospho-beta-D-ribosyl)-5'-AMP + H2O = 1-(5-phospho-beta-D-ribosyl)-5-[(5-phospho-beta-D-ribosylamino)methylideneamino]imidazole-4-carboxamide. Its pathway is amino-acid biosynthesis; L-histidine biosynthesis; L-histidine from 5-phospho-alpha-D-ribose 1-diphosphate: step 3/9. Its function is as follows. Catalyzes the hydrolysis of the adenine ring of phosphoribosyl-AMP. In Mycobacterium leprae (strain Br4923), this protein is Phosphoribosyl-AMP cyclohydrolase.